A 96-amino-acid polypeptide reads, in one-letter code: Fruit-specific protein (96 aa).

Disulfide bonds link Cys-59–Cys-75, Cys-63–Cys-78, and Cys-69–Cys-92.

As to expression, fruit specific.

In Solanum lycopersicum (Tomato), this protein is Fruit-specific protein (2A11).